The sequence spans 56 residues: U4-myrmicitoxin-Tb1a (56 aa).

An N-terminal signal peptide occupies residues 1 to 26 (MQPSYLLLTFAIIFVMVIMYSPAVEA). A propeptide spanning residues 27–40 (KAGADADADAHADA) is cleaved from the precursor. Position 53 is a glycine amide (glycine 53).

In terms of processing, contains 1 disulfide bond. In terms of tissue distribution, expressed by the venom gland.

The protein resides in the secreted. In terms of biological role, venom protein with unknown function. Does not induce paralysis when a high dose is administered by intrathoracic injection into the blowfly Lucilia caesar. This chain is U4-myrmicitoxin-Tb1a, found in Tetramorium bicarinatum (Tramp ant).